We begin with the raw amino-acid sequence, 316 residues long: ATP synthase gamma chain (316 aa).

It belongs to the ATPase gamma chain family. As to quaternary structure, F-type ATPases have 2 components, CF(1) - the catalytic core - and CF(0) - the membrane proton channel. CF(1) has five subunits: alpha(3), beta(3), gamma(1), delta(1), epsilon(1). CF(0) has three main subunits: a, b and c.

The protein localises to the cellular thylakoid membrane. Its function is as follows. Produces ATP from ADP in the presence of a proton gradient across the membrane. The gamma chain is believed to be important in regulating ATPase activity and the flow of protons through the CF(0) complex. This is ATP synthase gamma chain from Parasynechococcus marenigrum (strain WH8102).